The sequence spans 364 residues: N-alpha-acetyltransferase 30 (364 aa).

A compositionally biased stretch (pro residues) spans 1 to 18 (MAEVPPGPSSLLPPPAPA). Disordered regions lie at residues 1-21 (MAEV…AAPA), 39-65 (SEDE…TSAK), and 110-164 (EAAA…SDPA). S39 and S54 each carry phosphoserine. Residues 39-48 (SEDEEDDEEH) are compositionally biased toward acidic residues. The segment covering 126-135 (AEGHPGERPP) has biased composition (basic and acidic residues). Residues 152-164 (AAAAAAGAASDPA) are compositionally biased toward low complexity. Residues S192, S198, and S201 each carry the phosphoserine modification. In terms of domain architecture, N-acetyltransferase spans 216–364 (RYVRYESELQ…DALRLKLWLR (149 aa)). Residue K235 is modified to N6-acetyllysine.

It belongs to the acetyltransferase family. MAK3 subfamily. As to quaternary structure, component of the N-terminal acetyltransferase C (NatC) complex, which is composed of NAA35, NAA38 and NAA30.

The protein resides in the cytoplasm. It is found in the nucleus. The catalysed reaction is N-terminal L-methionyl-L-leucyl-[protein] + acetyl-CoA = N-terminal N(alpha)-acetyl-L-methionyl-L-leucyl-[protein] + CoA + H(+). The enzyme catalyses N-terminal L-methionyl-L-isoleucyl-[protein] + acetyl-CoA = N-terminal N(alpha)-acetyl-L-methionyl-L-isoleucyl-[protein] + CoA + H(+). It catalyses the reaction N-terminal L-methionyl-L-phenylalanyl-[protein] + acetyl-CoA = N-terminal N(alpha)-acetyl-L-methionyl-L-phenylalanyl-[protein] + CoA + H(+). It carries out the reaction N-terminal L-methionyl-L-tryptophyl-[protein] + acetyl-CoA = N-terminal N(alpha)-acetyl-L-methionyl-L-tryptophyl-[protein] + CoA + H(+). The catalysed reaction is N-terminal L-methionyl-L-tyrosyl-[protein] + acetyl-CoA = N-terminal N(alpha)-acetyl-L-methionyl-L-tyrosyl-[protein] + CoA + H(+). Functionally, catalytic subunit of the N-terminal acetyltransferase C (NatC) complex. Catalyzes acetylation of the N-terminal methionine residues of peptides beginning with Met-Leu-Ala and Met-Leu-Gly. N-terminal acetylation protects proteins from ubiquitination and degradation by the N-end rule pathway. Necessary for the lysosomal localization and function of ARL8B sugeesting that ARL8B is a NatC substrate. In Mus musculus (Mouse), this protein is N-alpha-acetyltransferase 30 (Naa30).